We begin with the raw amino-acid sequence, 352 residues long: DNA integrity scanning protein DisA (352 aa).

Residues 3 to 143 (PQELIEKIKL…NYKYVVNQVD (141 aa)) form the DAC domain. Residues Gly-71, Leu-89, and 102 to 106 (TRHRT) each bind ATP.

This sequence belongs to the DisA family. Homooctamer. The cofactor is Mg(2+).

The enzyme catalyses 2 ATP = 3',3'-c-di-AMP + 2 diphosphate. Participates in a DNA-damage check-point. DisA forms globular foci that rapidly scan along the chromosomes searching for lesions. Its function is as follows. Also has diadenylate cyclase activity, catalyzing the condensation of 2 ATP molecules into cyclic di-AMP (c-di-AMP). c-di-AMP likely acts as a signaling molecule that may couple DNA integrity with a cellular process. The chain is DNA integrity scanning protein DisA from Thermotoga petrophila (strain ATCC BAA-488 / DSM 13995 / JCM 10881 / RKU-1).